The following is a 339-amino-acid chain: Phenylalanine--tRNA ligase alpha subunit (339 aa).

E250 lines the Mg(2+) pocket.

Belongs to the class-II aminoacyl-tRNA synthetase family. Phe-tRNA synthetase alpha subunit type 1 subfamily. In terms of assembly, tetramer of two alpha and two beta subunits. The cofactor is Mg(2+).

The protein localises to the cytoplasm. The catalysed reaction is tRNA(Phe) + L-phenylalanine + ATP = L-phenylalanyl-tRNA(Phe) + AMP + diphosphate + H(+). The protein is Phenylalanine--tRNA ligase alpha subunit of Flavobacterium johnsoniae (strain ATCC 17061 / DSM 2064 / JCM 8514 / BCRC 14874 / CCUG 350202 / NBRC 14942 / NCIMB 11054 / UW101) (Cytophaga johnsonae).